A 551-amino-acid polypeptide reads, in one-letter code: Alkaline nuclease (551 aa).

The protein belongs to the herpesviridae alkaline nuclease family. Interacts with major DNA-binding protein; this interaction increases the nuclease processivity of the alkaline exonuclease.

The protein resides in the host nucleus. The protein localises to the host cytoplasm. In terms of biological role, plays a role in processing non linear or branched viral DNA intermediates in order to promote the production of mature packaged unit-length linear progeny viral DNA molecules. Exhibits endonuclease and exonuclease activities and accepts both double-stranded and single-stranded DNA as substrate. Exonuclease digestion of DNA is in the 5'-&gt; 3' direction and the products are 5'-monophosphate nucleosides. Additionally, forms a recombinase with the major DNA-binding protein, which displays strand exchange activity. This Varicella-zoster virus (strain Oka vaccine) (HHV-3) protein is Alkaline nuclease.